Here is a 322-residue protein sequence, read N- to C-terminus: 4-diphosphocytidyl-2-C-methyl-D-erythritol kinase (322 aa).

The active site involves K27. 112 to 122 (PVAGGMAGGSA) contributes to the ATP binding site. The active site involves D154.

Belongs to the GHMP kinase family. IspE subfamily.

The enzyme catalyses 4-CDP-2-C-methyl-D-erythritol + ATP = 4-CDP-2-C-methyl-D-erythritol 2-phosphate + ADP + H(+). It functions in the pathway isoprenoid biosynthesis; isopentenyl diphosphate biosynthesis via DXP pathway; isopentenyl diphosphate from 1-deoxy-D-xylulose 5-phosphate: step 3/6. Functionally, catalyzes the phosphorylation of the position 2 hydroxy group of 4-diphosphocytidyl-2C-methyl-D-erythritol. The protein is 4-diphosphocytidyl-2-C-methyl-D-erythritol kinase of Mycolicibacterium smegmatis (strain ATCC 700084 / mc(2)155) (Mycobacterium smegmatis).